We begin with the raw amino-acid sequence, 71 residues long: UPF0435 protein BPUM_0734 (71 aa).

This sequence belongs to the UPF0435 family.

The polypeptide is UPF0435 protein BPUM_0734 (Bacillus pumilus (strain SAFR-032)).